The chain runs to 133 residues: Alpha-amylase inhibitor/endochitinase (133 aa).

Glu30 (proton donor) is an active-site residue.

This sequence belongs to the glycosyl hydrolase 19 family. Chitinase class I subfamily.

The enzyme catalyses Random endo-hydrolysis of N-acetyl-beta-D-glucosaminide (1-&gt;4)-beta-linkages in chitin and chitodextrins.. Its function is as follows. This protein functions both as an alpha-amylase inhibitor and as a chitinase. This is Alpha-amylase inhibitor/endochitinase from Coix lacryma-jobi (Job's tears).